Consider the following 69-residue polypeptide: Brevinin-1Pb (69 aa).

The N-terminal stretch at 1–20 is a signal peptide; that stretch reads MFTLNKFLLLLFFLGTINLS. A propeptide spanning residues 21–43 is cleaved from the precursor; that stretch reads FCEEENAEEERIDEPDETDVEVE. Cysteines 63 and 69 form a disulfide.

As to expression, expressed by the skin glands.

The protein localises to the secreted. Its function is as follows. Antibacterial activity against Gram-positive bacterium S.aureus and Gram-negative bacterium E.coli. Has activity against C.albicans. The sequence is that of Brevinin-1Pb from Lithobates pipiens (Northern leopard frog).